A 238-amino-acid polypeptide reads, in one-letter code: 2-C-methyl-D-erythritol 4-phosphate cytidylyltransferase (238 aa).

This sequence belongs to the IspD/TarI cytidylyltransferase family. IspD subfamily.

It carries out the reaction 2-C-methyl-D-erythritol 4-phosphate + CTP + H(+) = 4-CDP-2-C-methyl-D-erythritol + diphosphate. It functions in the pathway isoprenoid biosynthesis; isopentenyl diphosphate biosynthesis via DXP pathway; isopentenyl diphosphate from 1-deoxy-D-xylulose 5-phosphate: step 2/6. Functionally, catalyzes the formation of 4-diphosphocytidyl-2-C-methyl-D-erythritol from CTP and 2-C-methyl-D-erythritol 4-phosphate (MEP). The chain is 2-C-methyl-D-erythritol 4-phosphate cytidylyltransferase from Pelotomaculum thermopropionicum (strain DSM 13744 / JCM 10971 / SI).